The chain runs to 160 residues: Sodium/proline symporter (160 aa).

2 helical membrane passes run 6–26 (PMLV…FIAW) and 68–88 (IFIS…GAWI).

It belongs to the sodium:solute symporter (SSF) (TC 2.A.21) family.

It is found in the cell inner membrane. It catalyses the reaction L-proline(in) + Na(+)(in) = L-proline(out) + Na(+)(out). Functionally, catalyzes the sodium-dependent uptake of extracellular L-proline. The protein is Sodium/proline symporter of Klebsiella oxytoca.